Here is a 253-residue protein sequence, read N- to C-terminus: Negative modulator of initiation of replication (253 aa).

The tract at residues 66 to 112 is disordered; it reads SNQEQQTGHGHAGEPSAVQTPESNDYAKAQPHSSGYQPGQLEGHKSE. Residues 154-155 are interaction with DNA; the sequence is AV.

This sequence belongs to the SeqA family. In terms of assembly, homodimer. Polymerizes to form helical filaments.

The protein resides in the cytoplasm. Its function is as follows. Negative regulator of replication initiation, which contributes to regulation of DNA replication and ensures that replication initiation occurs exactly once per chromosome per cell cycle. Binds to pairs of hemimethylated GATC sequences in the oriC region, thus preventing assembly of replication proteins and re-initiation at newly replicated origins. Repression is relieved when the region becomes fully methylated. The polypeptide is Negative modulator of initiation of replication (Shewanella denitrificans (strain OS217 / ATCC BAA-1090 / DSM 15013)).